Consider the following 167-residue polypeptide: HTH-type transcriptional repressor YetL (167 aa).

In terms of domain architecture, HTH marR-type spans 26-160 (SLELFLSLFD…FVKMLGDLFE (135 aa)). A DNA-binding region (H-T-H motif) is located at residues 74–97 (PTELAKRSNVTKATITGLLDGLAR).

Homodimer. The N- and C-terminal helices from both subunits stabilize YetL dimer via extensive intersubunit interactions.

Its activity is regulated as follows. Binding to the yetM cis sequence is clearly inhibited by kaempferol, morin, apigenin and luteolin, slightly inhibited by quercetin and galangin, but no inhibition is observed with the other flavonoids. Flavonoid binding may induce conformational changes and modulate interaction with DNA. Functionally, negatively regulates yetM expression and its own expression. Binds specifically to corresponding single sites in the divergent yetL and yetM promoter regions, with higher affinity to the yetM region. Recognizes a 28-mer operator of double-stranded DNA that contains a palindromic sequence. The polypeptide is HTH-type transcriptional repressor YetL (yetL) (Bacillus subtilis (strain 168)).